Consider the following 654-residue polypeptide: Marinolic acid--CoA ligase (654 aa).

The protein belongs to the ATP-dependent AMP-binding enzyme family.

It catalyses the reaction ATP + a marinolic acid + CoA = AMP + diphosphate + a marinoloyl-CoA.. It carries out the reaction ATP + a pseudomonic acid + CoA = AMP + diphosphate + a pseudomonoyl-CoA.. The catalysed reaction is marinolate C + ATP + CoA = marinoloyl-CoA C + AMP + diphosphate. The enzyme catalyses pseudomonate C + ATP + CoA = pseudomonoyl-CoA C + AMP + diphosphate. It functions in the pathway antibiotic biosynthesis. In terms of biological role, acyl-CoA ligase that catalyzes the CoA acylation of pseudomonate C, leading to the formation of pseudomonoyl-CoA C (PAC-CoA). Also shows high activity with pseudomonoyl-CoA A as substrate. In addition, can activate acetic, octanoic, 2,4-dodecadienoic and 2,4-decadienoic acids, although with much lower activity. In vivo, is probably involved in the biosynthesis of thiomarinol, a naturally occurring double-headed antibiotic. In Pseudoalteromonas sp. (strain SANK 73390), this protein is Marinolic acid--CoA ligase.